The sequence spans 398 residues: Bifunctional enzyme IspD/IspF (398 aa).

Residues 1–234 form a 2-C-methyl-D-erythritol 4-phosphate cytidylyltransferase region; sequence MTNSPRTAAI…SRLMAALGDI (234 aa). Residues 235–398 form a 2-C-methyl-D-erythritol 2,4-cyclodiphosphate synthase region; the sequence is RTGTGYDVHA…LPWGADGLAG (164 aa). A divalent metal cation-binding residues include D241 and H243. 4-CDP-2-C-methyl-D-erythritol 2-phosphate contacts are provided by residues 241–243 and 267–268; these read DVH and HS. H275 contributes to the a divalent metal cation binding site. Residues 289–291, 365–368, F372, and R375 contribute to the 4-CDP-2-C-methyl-D-erythritol 2-phosphate site; these read DIG and TTSE.

This sequence in the N-terminal section; belongs to the IspD/TarI cytidylyltransferase family. IspD subfamily. In the C-terminal section; belongs to the IspF family. The cofactor is a divalent metal cation.

It carries out the reaction 2-C-methyl-D-erythritol 4-phosphate + CTP + H(+) = 4-CDP-2-C-methyl-D-erythritol + diphosphate. It catalyses the reaction 4-CDP-2-C-methyl-D-erythritol 2-phosphate = 2-C-methyl-D-erythritol 2,4-cyclic diphosphate + CMP. It functions in the pathway isoprenoid biosynthesis; isopentenyl diphosphate biosynthesis via DXP pathway; isopentenyl diphosphate from 1-deoxy-D-xylulose 5-phosphate: step 2/6. It participates in isoprenoid biosynthesis; isopentenyl diphosphate biosynthesis via DXP pathway; isopentenyl diphosphate from 1-deoxy-D-xylulose 5-phosphate: step 4/6. In terms of biological role, bifunctional enzyme that catalyzes the formation of 4-diphosphocytidyl-2-C-methyl-D-erythritol from CTP and 2-C-methyl-D-erythritol 4-phosphate (MEP) (IspD), and catalyzes the conversion of 4-diphosphocytidyl-2-C-methyl-D-erythritol 2-phosphate (CDP-ME2P) to 2-C-methyl-D-erythritol 2,4-cyclodiphosphate (ME-CPP) with a corresponding release of cytidine 5-monophosphate (CMP) (IspF). This Rhodopseudomonas palustris (strain ATCC BAA-98 / CGA009) protein is Bifunctional enzyme IspD/IspF.